The primary structure comprises 1357 residues: Vascular endothelial growth factor receptor 2 (1357 aa).

Residues 1 to 22 (MAKTSYALLLLDILLTFNVAKA) form the signal peptide. Residues 23–774 (IELRFVPDPP…GAEEKMNVEL (752 aa)) lie on the Extracellular side of the membrane. Ig-like C2-type domains lie at 32–120 (PTLN…SVAV), 120–222 (VYVF…VAVV), 216–330 (PYIV…ASLI), 335–426 (PFIA…RTFQ), 433–553 (PRIF…VIVF), 556–667 (TRFL…LLHN), and 676–762 (SRIV…ARIS). Asn-35, Asn-44, Asn-66, Asn-97, Asn-161, Asn-209, Asn-247, Asn-272, Asn-303, Asn-307, Asn-407, Asn-501, Asn-560, Asn-621, Asn-631, Asn-640, Asn-681, Asn-688, and Asn-713 each carry an N-linked (GlcNAc...) asparagine glycan. 2 disulfide bridges follow: Cys-53–Cys-104 and Cys-153–Cys-203. Cys-248 and Cys-314 are joined by a disulfide. Cys-457 and Cys-538 form a disulfide bridge. Cys-579 and Cys-651 are disulfide-bonded. Cys-697 and Cys-746 are joined by a disulfide. Residues 775-795 (IMPIGAVVIAMFLWLLIVFVI) form a helical membrane-spanning segment. Residues 796–1357 (RNRKRPNDGD…AEVRYSAPPV (562 aa)) are Cytoplasmic-facing. A Protein kinase domain is found at 843-1173 (LKLGEPLGRG…FTQLVEHLGN (331 aa)). Residues 849–857 (LGRGAFGQV) and Lys-877 each bind ATP. Residues 944–975 (YSPYKKRTPRMPNRREVQQDEDPREGDLGLGT) are disordered. Residue Asp-1039 is the Proton acceptor of the active site. Phosphotyrosine; by autocatalysis occurs at positions 1065, 1070, 1186, and 1222. A disordered region spans residues 1296–1357 (SLASESSNQT…AEVRYSAPPV (62 aa)). The span at 1298-1312 (ASESSNQTSGYQSGY) shows a compositional bias: polar residues.

It belongs to the protein kinase superfamily. Tyr protein kinase family. CSF-1/PDGF receptor subfamily. In terms of assembly, interacts with isoform VEGF165 of vegfaa and, to a lesser extent, with isoform VEGF171 of vegfab. Interacts (via juxtamembrane region) with chaperone pdcl3 (via thioredoxin fold region); the interaction leads to increased vegfr2 abundance through inhibition of its ubiquitination and degradation. In terms of tissue distribution, first expressed in embryos between 5- and 7-somites in the bilateral stripes that contain the developing angioblasts, and then localized to the intermediate cell mass (ICM) and the developing vasculature. By 30 hpf, expressed in the major trunk, head and intersomitic vessels, persisting through 4 dpf when expression is seen in developing subintestinal veins and in the remaining vasculature.

The protein localises to the cell membrane. It is found in the cytoplasm. The protein resides in the nucleus. It localises to the cytoplasmic vesicle. Its subcellular location is the early endosome. The protein localises to the cell junction. It is found in the endoplasmic reticulum. The enzyme catalyses L-tyrosyl-[protein] + ATP = O-phospho-L-tyrosyl-[protein] + ADP + H(+). Receptor for VEGF or VEGFC. Has a tyrosine-protein kinase activity. Combinations of multiple VEGF receptors are required for development of different blood vessel types in the embryo. Involved in angiogenesis, specifically in VEGF-induced sprouting of new blood vessels. Particularly involved in artery formation. Does not appear to be required for hematopoiesis. In Danio rerio (Zebrafish), this protein is Vascular endothelial growth factor receptor 2.